A 191-amino-acid polypeptide reads, in one-letter code: uncharacterized protein (191 aa).

This is an uncharacterized protein from Agrobacterium tumefaciens (strain Ach5).